The sequence spans 704 residues: Elongation factor G (704 aa).

One can recognise a tr-type G domain in the interval 6–282 (NKVRNIGIMA…AVIDYLPTPL (277 aa)). Residues 15 to 22 (AHIDAGKT), 79 to 83 (DTPGH), and 133 to 136 (NKMD) each bind GTP.

This sequence belongs to the TRAFAC class translation factor GTPase superfamily. Classic translation factor GTPase family. EF-G/EF-2 subfamily.

It is found in the cytoplasm. Catalyzes the GTP-dependent ribosomal translocation step during translation elongation. During this step, the ribosome changes from the pre-translocational (PRE) to the post-translocational (POST) state as the newly formed A-site-bound peptidyl-tRNA and P-site-bound deacylated tRNA move to the P and E sites, respectively. Catalyzes the coordinated movement of the two tRNA molecules, the mRNA and conformational changes in the ribosome. This is Elongation factor G from Corynebacterium diphtheriae (strain ATCC 700971 / NCTC 13129 / Biotype gravis).